The primary structure comprises 1225 residues: ABC transporter B family member 18 (1225 aa).

The next 6 membrane-spanning stretches (helical) occupy residues 23–43 (MALG…IFFI), 70–90 (VALV…GYCW), 146–168 (LPNF…LLLW), 172–194 (IVGF…ALIR), 252–272 (GIAI…TWYG), and 284–304 (GTVS…GQSL). Residues 23–312 (MALGLIGAVG…SLSNLKYFSE (290 aa)) form the ABC transmembrane type-1 1 domain. One can recognise an ABC transporter 1 domain in the interval 347–583 (VEFNHVKFTY…LDGQYTSLVR (237 aa)). Position 382-389 (382-389 (GGSGSGKS)) interacts with ATP. An N-linked (GlcNAc...) asparagine glycan is attached at N530. 2 helical membrane passes run 657 to 677 (ALYG…YSYS) and 699 to 719 (IYVL…ISQH). The ABC transmembrane type-1 2 domain maps to 657–945 (ALYGCLGAAL…AGTMTKDLVK (289 aa)). N754 carries an N-linked (GlcNAc...) asparagine glycan. 4 consecutive transmembrane segments (helical) span residues 780-800 (LLVQ…VISW), 804-824 (IVMM…RVLL), 880-900 (SWLA…VSAL), and 919-939 (FLEI…AGTM). Residues N960 and N1000 are each glycosylated (N-linked (GlcNAc...) asparagine). An ABC transporter 2 domain is found at 980-1218 (ISFSNVDFAY…GPKGAYFSLV (239 aa)). 1015 to 1022 (GPSGSGKS) is an ATP binding site. A glycan (N-linked (GlcNAc...) asparagine) is linked at N1201.

This sequence belongs to the ABC transporter superfamily. ABCB family. Multidrug resistance exporter (TC 3.A.1.201) subfamily.

It is found in the membrane. The chain is ABC transporter B family member 18 (ABCB18) from Arabidopsis thaliana (Mouse-ear cress).